The sequence spans 153 residues: D-amino acid oxidase regulator (153 aa).

Positions 1-25 (MLEKLMGADSLQLFRSRYTLGKIYF) are involved in targeting to the mitochondrion. The interaction with DAO stretch occupies residues 138–153 (KDQSCNHKEITSTKAE).

As to quaternary structure, interacts with DAO (D-amino acid oxidase); the interaction is direct, can occur in the presence or absence of FAD or substrate bound to DAO, and results in a complex containing two DAO homodimers and two DAOA monomers. Interacts with DDO (D-aspartate oxidase); the interaction is direct. Interacts wih SOD1; the interaction is direct. Interacts with MSRB2; the interaction is direct. In terms of tissue distribution, expressed in the amygdala and in astrocytes of the cortex (at protein level). Expressed in the caudate nucleus, spinal cord and testis.

The protein localises to the cytoplasm. It is found in the cytosol. It localises to the golgi apparatus. The protein resides in the mitochondrion. Its function is as follows. May suppress DAO (D-amino acid oxidase) and SOD1 activity and promote their degradation. Has conversely also been suggested to function as a DAO activator. May stimulate the degradation of DDO (D-aspartate oxidase). May play a role in mitochondrial fission. The chain is D-amino acid oxidase regulator (DAOA) from Homo sapiens (Human).